A 256-amino-acid polypeptide reads, in one-letter code: Geranylgeranylglyceryl phosphate synthase (256 aa).

Residues D28 and S53 each contribute to the Mg(2+) site. Sn-glycerol 1-phosphate is bound by residues 172–178 (YLEAGSG), 203–204 (GG), and 225–226 (GT).

Belongs to the GGGP/HepGP synthase family. Group II subfamily. It depends on Mg(2+) as a cofactor.

It is found in the cytoplasm. The catalysed reaction is sn-glycerol 1-phosphate + (2E,6E,10E)-geranylgeranyl diphosphate = sn-3-O-(geranylgeranyl)glycerol 1-phosphate + diphosphate. Its pathway is membrane lipid metabolism; glycerophospholipid metabolism. Functionally, prenyltransferase that catalyzes the transfer of the geranylgeranyl moiety of geranylgeranyl diphosphate (GGPP) to the C3 hydroxyl of sn-glycerol-1-phosphate (G1P). This reaction is the first ether-bond-formation step in the biosynthesis of archaeal membrane lipids. In Methanococcus maripaludis (strain C7 / ATCC BAA-1331), this protein is Geranylgeranylglyceryl phosphate synthase.